The following is a 307-amino-acid chain: Homoserine kinase (307 aa).

92–102 lines the ATP pocket; the sequence is PLARGLGSSAT.

Belongs to the GHMP kinase family. Homoserine kinase subfamily.

It is found in the cytoplasm. It catalyses the reaction L-homoserine + ATP = O-phospho-L-homoserine + ADP + H(+). It functions in the pathway amino-acid biosynthesis; L-threonine biosynthesis; L-threonine from L-aspartate: step 4/5. Functionally, catalyzes the ATP-dependent phosphorylation of L-homoserine to L-homoserine phosphate. The chain is Homoserine kinase (thrB) from Microchaete diplosiphon (Fremyella diplosiphon).